Reading from the N-terminus, the 653-residue chain is MKTAPITPGRLAFSPDGVPLAPEFGDVYHPAAGALQQAHHVFLGGNRLPARWGGRGRFVILETGFGLGNNFLATWDAWQRDPQRCERLVFVSIEKHPLTREDLARAHAASPLPELARALVSAWPLSTPNLHPIAFEGGRVQLLLGFGDVALLLPQLVVSVDAFFLDGFAPARNPEMWEPRRLQRLGRLAAPGATAATWSAARVVRDGLSAAGFTVETTAGTGGKRDITVARFTPRHIAVPPPGGWHAHDAASREALVIGAGLAGCAAAWALSQQGWQCQLLDRAAEPADVTSGNPAGLFHGSFHRDDGPHARTLRAAALATERLAGAWIAQGRVSGQLAGCLRLESRWSDDAARAAMAAQQIAPGYIDWMDRAVASTLSGLALPSGAWFYPGGGWLAPRDYARELLARSGSLFRGGIDVATIERHSGLWRVLDEQRQVIAEAPVLVLANGLGANGLLASGRGEVPWPLTAVRGQISSLATDGHPATLPCPRLPVAGGGYVLPQTGGRLLFGATSQPDDIDPALRDADHRFNLQQLAGLSGCDVEAWSSLPWQGRVGWRAVTSDRLPLIGAVPDLEALDRTSRADQPRFVPRQRDARGGLYVFTGLGSRGITWAALGGQLLASWISGAPCPLEADLRDALDPARYALPRWRSDS.

The interval 1-233 (MKTAPITPGR…KRDITVARFT (233 aa)) is tRNA (mnm(5)s(2)U34)-methyltransferase. The interval 258 to 653 (IGAGLAGCAA…YALPRWRSDS (396 aa)) is FAD-dependent cmnm(5)s(2)U34 oxidoreductase.

The protein in the N-terminal section; belongs to the methyltransferase superfamily. tRNA (mnm(5)s(2)U34)-methyltransferase family. It in the C-terminal section; belongs to the DAO family. The cofactor is FAD.

The protein resides in the cytoplasm. The catalysed reaction is 5-aminomethyl-2-thiouridine(34) in tRNA + S-adenosyl-L-methionine = 5-methylaminomethyl-2-thiouridine(34) in tRNA + S-adenosyl-L-homocysteine + H(+). In terms of biological role, catalyzes the last two steps in the biosynthesis of 5-methylaminomethyl-2-thiouridine (mnm(5)s(2)U) at the wobble position (U34) in tRNA. Catalyzes the FAD-dependent demodification of cmnm(5)s(2)U34 to nm(5)s(2)U34, followed by the transfer of a methyl group from S-adenosyl-L-methionine to nm(5)s(2)U34, to form mnm(5)s(2)U34. The sequence is that of tRNA 5-methylaminomethyl-2-thiouridine biosynthesis bifunctional protein MnmC from Methylibium petroleiphilum (strain ATCC BAA-1232 / LMG 22953 / PM1).